Here is a 907-residue protein sequence, read N- to C-terminus: Eukaryotic translation initiation factor 4 gamma 2 (907 aa).

Position 1 is an N-acetylmethionine (Met-1). A disordered region spans residues 1–71 (MESAIAEGGA…SAANNSANEK (71 aa)). Residue Ser-11 is modified to Phosphoserine. Positions 78–308 (FRKVRGILNK…QDTVELREHH (231 aa)) constitute an MIF4G domain. Thr-89 carries the post-translational modification Phosphothreonine. At Arg-360 the chain carries Omega-N-methylarginine. At Ser-395 the chain carries Phosphoserine. Residue Lys-431 is modified to N6-methyllysine. Phosphoserine is present on Ser-443. Residues 498-541 (PPSAQPPRTQTPPLGQTPQLGLKTNPPLIQEKPAKTSKKPPPSK) are disordered. Over residues 503 to 516 (PPRTQTPPLGQTPQ) the composition is skewed to polar residues. Residue Arg-505 is modified to Omega-N-methylarginine. 2 positions are modified to phosphothreonine: Thr-508 and Thr-514. The MI domain occupies 543 to 666 (ELLKLTETVV…SISELAQPLE (124 aa)). Residue Lys-575 forms a Glycyl lysine isopeptide (Lys-Gly) (interchain with G-Cter in SUMO2) linkage. One can recognise a W2 domain in the interval 720–904 (EGKGLSFLFP…ETAEEEESEE (185 aa)). Residue Ser-902 is modified to Phosphoserine.

The protein belongs to the eukaryotic initiation factor 4G family. In terms of assembly, interacts with the serine/threonine protein kinases MKNK1 and MKNK2. Binds EIF4A and EIF3. Interacts with MIF4GD. Interacts with DAZAP2. Phosphorylation; hyperphosphorylated during mitosis.

Appears to play a role in the switch from cap-dependent to IRES-mediated translation during mitosis, apoptosis and viral infection. Cleaved by some caspases and viral proteases. The protein is Eukaryotic translation initiation factor 4 gamma 2 of Oryctolagus cuniculus (Rabbit).